A 398-amino-acid polypeptide reads, in one-letter code: Phosphoglycerate kinase (398 aa).

Residues 21–23 (DFN), R36, 59–62 (HLGR), R119, and R157 contribute to the substrate site. ATP-binding positions include K208, G296, E327, and 354–357 (GGDS).

The protein belongs to the phosphoglycerate kinase family. Monomer.

It localises to the cytoplasm. It carries out the reaction (2R)-3-phosphoglycerate + ATP = (2R)-3-phospho-glyceroyl phosphate + ADP. The protein operates within carbohydrate degradation; glycolysis; pyruvate from D-glyceraldehyde 3-phosphate: step 2/5. The protein is Phosphoglycerate kinase (pgk) of Lactococcus lactis subsp. lactis (strain IL1403) (Streptococcus lactis).